A 187-amino-acid chain; its full sequence is Crossover junction endodeoxyribonuclease RuvC (187 aa).

Active-site residues include aspartate 7, glutamate 67, and aspartate 140. Aspartate 7, glutamate 67, and aspartate 140 together coordinate Mg(2+).

This sequence belongs to the RuvC family. In terms of assembly, homodimer which binds Holliday junction (HJ) DNA. The HJ becomes 2-fold symmetrical on binding to RuvC with unstacked arms; it has a different conformation from HJ DNA in complex with RuvA. In the full resolvosome a probable DNA-RuvA(4)-RuvB(12)-RuvC(2) complex forms which resolves the HJ. Mg(2+) serves as cofactor.

It is found in the cytoplasm. The enzyme catalyses Endonucleolytic cleavage at a junction such as a reciprocal single-stranded crossover between two homologous DNA duplexes (Holliday junction).. The RuvA-RuvB-RuvC complex processes Holliday junction (HJ) DNA during genetic recombination and DNA repair. Endonuclease that resolves HJ intermediates. Cleaves cruciform DNA by making single-stranded nicks across the HJ at symmetrical positions within the homologous arms, yielding a 5'-phosphate and a 3'-hydroxyl group; requires a central core of homology in the junction. The consensus cleavage sequence is 5'-(A/T)TT(C/G)-3'. Cleavage occurs on the 3'-side of the TT dinucleotide at the point of strand exchange. HJ branch migration catalyzed by RuvA-RuvB allows RuvC to scan DNA until it finds its consensus sequence, where it cleaves and resolves the cruciform DNA. This chain is Crossover junction endodeoxyribonuclease RuvC, found in Prosthecochloris aestuarii (strain DSM 271 / SK 413).